A 432-amino-acid polypeptide reads, in one-letter code: Trigger factor (432 aa).

One can recognise a PPIase FKBP-type domain in the interval 161–246 (GTRATINFVG…VVKVESRELP (86 aa)).

Belongs to the FKBP-type PPIase family. Tig subfamily.

It is found in the cytoplasm. It carries out the reaction [protein]-peptidylproline (omega=180) = [protein]-peptidylproline (omega=0). Functionally, involved in protein export. Acts as a chaperone by maintaining the newly synthesized protein in an open conformation. Functions as a peptidyl-prolyl cis-trans isomerase. The polypeptide is Trigger factor (Aliivibrio fischeri (strain ATCC 700601 / ES114) (Vibrio fischeri)).